The primary structure comprises 80 residues: Dolichol-phosphate mannose synthase subunit 2 (80 aa).

2 helical membrane passes run 10–30 and 50–70; these read LLLS…VIIL and ILVP…FIGM.

The protein belongs to the DPM2 family. Component of the dolichol-phosphate mannose (DPM) synthase complex composed of DPMS1, DPMS2 and DPMS3; in the complex interacts directly with DPMS3. Associates with the GPI-GlcNAc transferase (GPI-GnT) complex.

Its subcellular location is the endoplasmic reticulum membrane. The protein operates within protein modification; protein glycosylation. In terms of biological role, regulates the biosynthesis of dolichol phosphate-mannose. Regulatory subunit of the dolichol-phosphate mannose (DPM) synthase complex; essential for the ER localization and stable expression of DPMS1. The chain is Dolichol-phosphate mannose synthase subunit 2 from Arabidopsis thaliana (Mouse-ear cress).